We begin with the raw amino-acid sequence, 743 residues long: Keratin, type I cytoskeletal 9 (743 aa).

The segment covering 1–16 has biased composition (low complexity); the sequence is MSCRQSSSSFWSSSSS. The disordered stretch occupies residues 1–46; that stretch reads MSCRQSSSSFWSSSSSCGGGGGRGGSGGSMRSSFSRSSRAGGGGGG. A head region spans residues 1-130; the sequence is MSCRQSSSSF…GGEGGILNTN (130 aa). 2 positions are modified to phosphoserine: Ser14 and Ser16. The span at 17 to 28 shows a compositional bias: gly residues; sequence CGGGGGRGGSGG. Over residues 29–39 the composition is skewed to low complexity; the sequence is SMRSSFSRSSR. Phosphoserine is present on residues Ser55 and Ser155. Positions 131 to 166 are coil 1A; the sequence is EKIVMQNLNSRLASYMEKVLELEESNTAMEKQIQDW. Residues 131 to 443 enclose the IF rod domain; that stretch reads EKIVMQNLNS…ELLEGGQQDF (313 aa). Residues 167-185 are linker 1; that stretch reads YSKRGPKVFQKDNTHYYDT. The coil 1B stretch occupies residues 186-277; sequence IEDLKDRIVD…KNHKEEMSQL (92 aa). Residues 278–300 form a linker 12 region; the sequence is TGQNDGDVNVEINVAPSTDLTRV. The interval 301-439 is coil 2; the sequence is LNDMREEYEQ…ETYRELLEGG (139 aa). 2 disordered regions span residues 440-468 and 501-743; these read QQDFESSGAGQIGFGSGKGRQRGSGGSYG and GGSG…KMRY. The tract at residues 440–709 is tail; the sequence is QQDFESSGAG…GGGSGSGGGS (270 aa). 2 stretches are compositionally biased toward gly residues: residues 449–468 and 501–717; these read GQIGFGSGKGRQRGSGGSYG and GGSG…GGGN.

It belongs to the intermediate filament family. As to quaternary structure, heterotetramer of two type I and two type II keratins. In terms of tissue distribution, expressed in footpad epidermis and testis (at protein level).

May serve an important special function either in the mature palmar and plantar skin tissue or in the morphogenetic program of the formation of these tissues. Plays a role in keratin filament assembly. Plays an essential role in the correct development of sperm. The protein is Keratin, type I cytoskeletal 9 of Mus musculus (Mouse).